The primary structure comprises 344 residues: Cytochrome c biogenesis protein CcsA (344 aa).

Transmembrane regions (helical) follow at residues 21 to 41, 45 to 65, 80 to 100, 106 to 126, 151 to 171, 252 to 272, 287 to 307, and 313 to 333; these read NVAF…AAFP, LLSE…AALL, LYES…LALH, WVGV…ALAL, VMLL…AFLI, LIGL…VWAN, WALI…TKGW, and ALLA…VNFL.

It belongs to the CcmF/CycK/Ccl1/NrfE/CcsA family. As to quaternary structure, may interact with ccs1.

The protein resides in the cellular thylakoid membrane. In terms of biological role, required during biogenesis of c-type cytochromes (cytochrome c6 and cytochrome f) at the step of heme attachment. This chain is Cytochrome c biogenesis protein CcsA, found in Synechococcus sp. (strain JA-3-3Ab) (Cyanobacteria bacterium Yellowstone A-Prime).